The chain runs to 2313 residues: Protein Ycf2 (2313 aa).

1606-1613 (GSMETGRS) contacts ATP.

Belongs to the Ycf2 family.

It localises to the plastid. The protein resides in the chloroplast stroma. Probable ATPase of unknown function. Its presence in a non-photosynthetic plant (Epifagus virginiana) and experiments in tobacco indicate that it has an essential function which is probably not related to photosynthesis. This is Protein Ycf2 from Psilotum nudum (Whisk fern).